The sequence spans 398 residues: Abhydrolase domain-containing protein 2 (398 aa).

Topologically, residues 1 to 4 (MSTA) are cytoplasmic. A helical; Signal-anchor for type II membrane protein membrane pass occupies residues 5-22 (FLTLIAVIVCILFRILNV). The Extracellular portion of the chain corresponds to 23-398 (HSQPLKPSVW…MMHEVGKVAP (376 aa)). The region spanning 113–365 (VAICPGIANS…HGGHLGFYEG (253 aa)) is the AB hydrolase-1 domain. Active-site charge relay system residues include Ser192, Asp328, and His359.

It belongs to the AB hydrolase superfamily. AB hydrolase 4 family.

It is found in the membrane. The polypeptide is Abhydrolase domain-containing protein 2 (Hydr2) (Drosophila melanogaster (Fruit fly)).